A 352-amino-acid chain; its full sequence is Selenide, water dikinase (352 aa).

Residue Cys-23 is part of the active site. ATP-binding positions include Lys-26 and 54-56 (SRD). Residue Asp-57 participates in Mg(2+) binding. Residues Asp-74, Asp-97, and 145-147 (GHS) each bind ATP. Residue Asp-97 coordinates Mg(2+). Mg(2+) is bound at residue Asp-233.

Belongs to the selenophosphate synthase 1 family. Class I subfamily. In terms of assembly, homodimer. It depends on Mg(2+) as a cofactor.

It carries out the reaction hydrogenselenide + ATP + H2O = selenophosphate + AMP + phosphate + 2 H(+). Functionally, synthesizes selenophosphate from selenide and ATP. In Shewanella putrefaciens (strain CN-32 / ATCC BAA-453), this protein is Selenide, water dikinase.